We begin with the raw amino-acid sequence, 325 residues long: Nod factor export ATP-binding protein I (325 aa).

Residues 27-257 (LELRKVRKQY…QIGCDVVEVY (231 aa)) enclose the ABC transporter domain. 59-66 (GPNGAGKT) is a binding site for ATP.

It belongs to the ABC transporter superfamily. Lipooligosaccharide exporter (TC 3.A.1.102) family. The complex is composed of two ATP-binding proteins (NodI) and two transmembrane proteins (NodJ).

Its subcellular location is the cell inner membrane. Functionally, part of the ABC transporter complex NodIJ involved in the export of the nodulation factors (Nod factors), the bacterial signal molecules that induce symbiosis and subsequent nodulation induction. Nod factors are LCO (lipo-chitin oligosaccharide), a modified beta-1,4-linked N-acetylglucosamine oligosaccharide. This subunit is responsible for energy coupling to the transport system. The chain is Nod factor export ATP-binding protein I from Cupriavidus pinatubonensis (strain JMP 134 / LMG 1197) (Cupriavidus necator (strain JMP 134)).